Consider the following 143-residue polypeptide: Large ribosomal subunit protein uL11 (143 aa).

The protein belongs to the universal ribosomal protein uL11 family. In terms of assembly, part of the ribosomal stalk of the 50S ribosomal subunit. Interacts with L10 and the large rRNA to form the base of the stalk. L10 forms an elongated spine to which L12 dimers bind in a sequential fashion forming a multimeric L10(L12)X complex. In terms of processing, one or more lysine residues are methylated.

Functionally, forms part of the ribosomal stalk which helps the ribosome interact with GTP-bound translation factors. The sequence is that of Large ribosomal subunit protein uL11 from Caulobacter sp. (strain K31).